A 165-amino-acid polypeptide reads, in one-letter code: Ribosome maturation factor RimM (165 aa).

Positions 94–165 (EDEFYIADLT…YVILNYQREA (72 aa)) constitute a PRC barrel domain.

The protein belongs to the RimM family. In terms of assembly, binds ribosomal protein uS19.

It localises to the cytoplasm. An accessory protein needed during the final step in the assembly of 30S ribosomal subunit, possibly for assembly of the head region. Essential for efficient processing of 16S rRNA. May be needed both before and after RbfA during the maturation of 16S rRNA. It has affinity for free ribosomal 30S subunits but not for 70S ribosomes. The protein is Ribosome maturation factor RimM of Rickettsia conorii (strain ATCC VR-613 / Malish 7).